The following is a 543-amino-acid chain: T-complex protein 1 subunit eta (543 aa).

Met1 is subject to N-acetylmethionine. Gly41 is a binding site for ADP. Gly41 provides a ligand contact to ATP. Lys67 carries the N6-acetyllysine modification. Asp92 lines the Mg(2+) pocket. Positions 93, 94, 95, 96, 164, and 165 each coordinate ADP. ATP is bound at residue Gly93. ATP is bound at residue Ser96. Lys250 and Lys320 each carry N6-acetyllysine. Positions 398 and 409 each coordinate ATP. Gly409 provides a ligand contact to ADP. Lys430 participates in a covalent cross-link: Glycyl lysine isopeptide (Lys-Gly) (interchain with G-Cter in SUMO2). Glu494 and Arg499 together coordinate ADP. ATP is bound at residue Arg499. Arg535 carries the omega-N-methylarginine modification.

This sequence belongs to the TCP-1 chaperonin family. As to quaternary structure, component of the chaperonin-containing T-complex (TRiC), a hexadecamer composed of two identical back-to-back stacked rings enclosing a protein folding chamber. Each ring is made up of eight different subunits: TCP1/CCT1, CCT2, CCT3, CCT4, CCT5, CCT6A/CCT6, CCT7, CCT8. Interacts with PACRG. Interacts with DLEC1.

It localises to the cytoplasm. The enzyme catalyses ATP + H2O = ADP + phosphate + H(+). Functionally, component of the chaperonin-containing T-complex (TRiC), a molecular chaperone complex that assists the folding of actin, tubulin and other proteins upon ATP hydrolysis. The TRiC complex mediates the folding of WRAP53/TCAB1, thereby regulating telomere maintenance. This chain is T-complex protein 1 subunit eta (CCT7), found in Pongo abelii (Sumatran orangutan).